Here is a 63-residue protein sequence, read N- to C-terminus: Small ribosomal subunit protein eS17 (63 aa).

It belongs to the eukaryotic ribosomal protein eS17 family.

The protein is Small ribosomal subunit protein eS17 of Methanococcus maripaludis (strain DSM 14266 / JCM 13030 / NBRC 101832 / S2 / LL).